The primary structure comprises 741 residues: Moderate conductance mechanosensitive channel YbiO (741 aa).

The N-terminal stretch at 1–18 is a signal peptide; the sequence is MRWILFILFCLLGAPAHA. The disordered stretch occupies residues 22–42; that stretch reads PGVTTTTTTDSTTEPAPEPDI. Low complexity predominate over residues 25-34; sequence TTTTTTDSTT. Transmembrane regions (helical) follow at residues 143–163, 185–205, 225–245, 268–288, 294–314, 343–363, 372–392, 432–452, 466–486, 509–529, and 533–553; these read MLAV…LPLY, AMII…LFVG, LFLN…LIFC, LSWL…IISN, IGAL…LYLI, FALV…FFSL, FMMG…FVSG, ILTV…FDFW, ILIR…VLAS, LLTL…IMIV, and IGVN…AISF.

The protein belongs to the MscS (TC 1.A.23) family. Homoheptamer.

The protein resides in the cell inner membrane. Functionally, mechanosensitive channel that protects cells against hypoosmotic stress when highly overexpressed. This chain is Moderate conductance mechanosensitive channel YbiO (ybiO), found in Escherichia coli (strain K12).